The sequence spans 382 residues: 1-deoxy-D-xylulose 5-phosphate reductoisomerase (382 aa).

Threonine 10, glycine 11, serine 12, isoleucine 13, asparagine 38, and asparagine 120 together coordinate NADPH. Lysine 121 contacts 1-deoxy-D-xylulose 5-phosphate. An NADPH-binding site is contributed by glutamate 122. Residue aspartate 146 coordinates Mn(2+). Serine 147, glutamate 148, serine 172, and histidine 195 together coordinate 1-deoxy-D-xylulose 5-phosphate. Glutamate 148 lines the Mn(2+) pocket. Glycine 201 contributes to the NADPH binding site. 1-deoxy-D-xylulose 5-phosphate is bound by residues serine 208, asparagine 213, lysine 214, and glutamate 217. Residue glutamate 217 participates in Mn(2+) binding.

Belongs to the DXR family. Requires Mg(2+) as cofactor. The cofactor is Mn(2+).

The catalysed reaction is 2-C-methyl-D-erythritol 4-phosphate + NADP(+) = 1-deoxy-D-xylulose 5-phosphate + NADPH + H(+). It participates in isoprenoid biosynthesis; isopentenyl diphosphate biosynthesis via DXP pathway; isopentenyl diphosphate from 1-deoxy-D-xylulose 5-phosphate: step 1/6. In terms of biological role, catalyzes the NADPH-dependent rearrangement and reduction of 1-deoxy-D-xylulose-5-phosphate (DXP) to 2-C-methyl-D-erythritol 4-phosphate (MEP). The protein is 1-deoxy-D-xylulose 5-phosphate reductoisomerase of Caldanaerobacter subterraneus subsp. tengcongensis (strain DSM 15242 / JCM 11007 / NBRC 100824 / MB4) (Thermoanaerobacter tengcongensis).